Reading from the N-terminus, the 88-residue chain is Phosphocarrier protein HPr (88 aa).

Residues 1–88 enclose the HPr domain; that stretch reads MAQKTFTVTA…DTMSKEGLGE (88 aa). Phosphoserine is present on serine 12. Histidine 15 (pros-phosphohistidine intermediate) is an active-site residue. Serine 46 is modified (phosphoserine; by HPrK/P).

It belongs to the HPr family.

The protein resides in the cytoplasm. Phosphorylation on Ser-46 inhibits the phosphoryl transfer from enzyme I to HPr. General (non sugar-specific) component of the phosphoenolpyruvate-dependent sugar phosphotransferase system (sugar PTS). This major carbohydrate active-transport system catalyzes the phosphorylation of incoming sugar substrates concomitantly with their translocation across the cell membrane. The phosphoryl group from phosphoenolpyruvate (PEP) is transferred to the phosphoryl carrier protein HPr by enzyme I. Phospho-HPr then transfers it to the PTS EIIA domain. In terms of biological role, P-Ser-HPr interacts with the catabolite control protein A (CcpA), forming a complex that binds to DNA at the catabolite response elements cre, operator sites preceding a large number of catabolite-regulated genes. Thus, P-Ser-HPr is a corepressor in carbon catabolite repression (CCR), a mechanism that allows bacteria to coordinate and optimize the utilization of available carbon sources. P-Ser-HPr also plays a role in inducer exclusion, in which it probably interacts with several non-PTS permeases and inhibits their transport activity. This Priestia megaterium (Bacillus megaterium) protein is Phosphocarrier protein HPr (ptsH).